The chain runs to 64 residues: Conotoxin Cal6.26 (64 aa).

The N-terminal stretch at 1–22 (MKLTCVMIVAVLVLTVCKVVTS) is a signal peptide. Disulfide bonds link cysteine 32–cysteine 50, cysteine 40–cysteine 54, and cysteine 49–cysteine 60.

In terms of tissue distribution, expressed by the venom duct.

It is found in the secreted. In terms of biological role, probable neurotoxin. The protein is Conotoxin Cal6.26 of Californiconus californicus (California cone).